The sequence spans 103 residues: Small ribosomal subunit protein uS10 (103 aa).

It belongs to the universal ribosomal protein uS10 family. In terms of assembly, part of the 30S ribosomal subunit.

Involved in the binding of tRNA to the ribosomes. In Pseudomonas aeruginosa (strain LESB58), this protein is Small ribosomal subunit protein uS10.